The sequence spans 451 residues: Exodeoxyribonuclease 7 large subunit (451 aa).

Belongs to the XseA family. As to quaternary structure, heterooligomer composed of large and small subunits.

The protein resides in the cytoplasm. It catalyses the reaction Exonucleolytic cleavage in either 5'- to 3'- or 3'- to 5'-direction to yield nucleoside 5'-phosphates.. Functionally, bidirectionally degrades single-stranded DNA into large acid-insoluble oligonucleotides, which are then degraded further into small acid-soluble oligonucleotides. The sequence is that of Exodeoxyribonuclease 7 large subunit from Bacillus cytotoxicus (strain DSM 22905 / CIP 110041 / 391-98 / NVH 391-98).